Reading from the N-terminus, the 251-residue chain is Keratin-associated protein 10-10 (251 aa).

Tandem repeats lie at residues 26 to 30, 31 to 35, 52 to 56, 84 to 88, 94 to 98, 99 to 103, 104 to 109, 126 to 130, 136 to 140, 146 to 150, 168 to 172, 178 to 182, 183 to 187, 202 to 206, and 220 to 224. The tract at residues 26 to 224 is 15 X 5 AA repeats of C-C-X(3); sequence CCEPCCCAPA…SCQPSCCRTA (199 aa).

This sequence belongs to the KRTAP type 10 family. Interacts with hair keratins. As to expression, restricted to a narrow region of the hair fiber cuticle, lying approximately 20 cell layers above the apex of the dermal papilla of the hair root; not detected in any other tissues.

Its function is as follows. In the hair cortex, hair keratin intermediate filaments are embedded in an interfilamentous matrix, consisting of hair keratin-associated proteins (KRTAP), which are essential for the formation of a rigid and resistant hair shaft through their extensive disulfide bond cross-linking with abundant cysteine residues of hair keratins. The matrix proteins include the high-sulfur and high-glycine-tyrosine keratins. This chain is Keratin-associated protein 10-10 (KRTAP10-10), found in Homo sapiens (Human).